Reading from the N-terminus, the 290-residue chain is Arylamine N-acetyltransferase, pineal gland isozyme NAT-3 (290 aa).

Cys68 (acyl-thioester intermediate) is an active-site residue. Active-site residues include His107 and Asp122.

The protein belongs to the arylamine N-acetyltransferase family.

It carries out the reaction an arylamine + acetyl-CoA = an N-acetylarylamine + CoA. The enzyme catalyses an N-hydroxyarylamine + acetyl-CoA = an N-acetoxyarylamine + CoA. Catalyzes the N- or O-acetylation of various arylamine and heterocyclic amine substrates, and participates in the detoxification of a plethora of hydrazine and arylamine drugs. This is Arylamine N-acetyltransferase, pineal gland isozyme NAT-3 from Gallus gallus (Chicken).